The following is a 673-amino-acid chain: Glycine--tRNA ligase beta subunit (673 aa).

It belongs to the class-II aminoacyl-tRNA synthetase family. Tetramer of two alpha and two beta subunits.

Its subcellular location is the cytoplasm. The catalysed reaction is tRNA(Gly) + glycine + ATP = glycyl-tRNA(Gly) + AMP + diphosphate. The chain is Glycine--tRNA ligase beta subunit from Lactococcus lactis subsp. cremoris (strain MG1363).